The chain runs to 250 residues: Kv channel-interacting protein 4 (250 aa).

Positions 2-44 (NVRRVESISAQLEEASSTGGFLYTQNSTKRSIKERLMKLLPCS) are KIS. A phosphoserine mark is found at Ser17 and Ser56. An EF-hand 1; degenerate domain is found at 61-117 (LEMATVRHRPEALELLEAQSKFTKKELQILYRGFKNECPSGVVNEDTFKEIYSQFFP). 3 EF-hand domains span residues 120-155 (DSTT…LLRG), 156-191 (TVQE…IYDM), and 204-239 (APRQ…DENI). Positions 133, 135, 137, 144, 169, 171, 173, 175, 180, 217, 219, 221, and 228 each coordinate Ca(2+). The segment at 237-250 (ENIMRSMQLFENVI) is interaction with KCND2.

Belongs to the recoverin family. Component of heteromultimeric potassium channels. Identified in potassium channel complexes containing KCND1, KCND2, KCND3, KCNIP1, KCNIP2, KCNIP3, KCNIP4, DPP6 and DPP10. Interacts with KCND2. Interacts with KCND3. Interacts with the C-terminus of PSEN2 and probably PSEN1.

The protein localises to the cell membrane. It is found in the cytoplasm. Its subcellular location is the peroxisome. Regulatory subunit of Kv4/D (Shal)-type voltage-gated rapidly inactivating A-type potassium channels. Modulates KCND2 channel density, inactivation kinetics and rate of recovery from inactivation in a calcium-dependent and isoform-specific manner. Modulates KCND3/Kv4.3 currents. Isoform 4 does not increase KCND2 expression at the cell membrane. Isoform 4 retains KCND3 in the endoplasmic reticulum and negatively regulates its expression at the cell membrane. The sequence is that of Kv channel-interacting protein 4 (KCNIP4) from Bos taurus (Bovine).